Here is a 199-residue protein sequence, read N- to C-terminus: Holliday junction branch migration complex subunit RuvA (199 aa).

Positions 1-63 (MIAYIEGKLA…EDAHTLFGFA (63 aa)) are domain I. Residues 64-142 (DLMEKEMFLH…KDALLAGSDS (79 aa)) form a domain II region. Residues 143 to 151 (KQNFSVSHN) form a flexible linker region. The segment at 151–199 (NSIRSEALTALITLGFTKTVAEKNLDLILKGNSNSFTLEDLIKQALKMS) is domain III.

It belongs to the RuvA family. In terms of assembly, homotetramer. Forms an RuvA(8)-RuvB(12)-Holliday junction (HJ) complex. HJ DNA is sandwiched between 2 RuvA tetramers; dsDNA enters through RuvA and exits via RuvB. An RuvB hexamer assembles on each DNA strand where it exits the tetramer. Each RuvB hexamer is contacted by two RuvA subunits (via domain III) on 2 adjacent RuvB subunits; this complex drives branch migration. In the full resolvosome a probable DNA-RuvA(4)-RuvB(12)-RuvC(2) complex forms which resolves the HJ.

The protein localises to the cytoplasm. In terms of biological role, the RuvA-RuvB-RuvC complex processes Holliday junction (HJ) DNA during genetic recombination and DNA repair, while the RuvA-RuvB complex plays an important role in the rescue of blocked DNA replication forks via replication fork reversal (RFR). RuvA specifically binds to HJ cruciform DNA, conferring on it an open structure. The RuvB hexamer acts as an ATP-dependent pump, pulling dsDNA into and through the RuvAB complex. HJ branch migration allows RuvC to scan DNA until it finds its consensus sequence, where it cleaves and resolves the cruciform DNA. The sequence is that of Holliday junction branch migration complex subunit RuvA from Cytophaga hutchinsonii (strain ATCC 33406 / DSM 1761 / CIP 103989 / NBRC 15051 / NCIMB 9469 / D465).